The primary structure comprises 1079 residues: MAWFGYCLALLALTWHSSAYGPDQRAQKKGDIILGGLFPIHFGVAAKDQDLKSRPESVECIRYNFRGFRWLQAMIFAIEEINSSPALLPNMTLGYRIFDTCNTVSKALEATLSFVAQNKIDSLNLDEFCNCSEHIPSTIAVVGATGSGVSTAVANLLGLFYIPQVSYASSSRLLSNKNQFKSFLRTIPNDEHQATAMADIIEYFRWNWVGTIAADDDYGRPGIEKFREEAEERDICIDFSELISQYSDEEEIQQVVEVIQNSTAKVIVVFSSGPDLEPLIKEIVRRNITGRIWLASEAWASSSLIAMPEYFHVVGGTIGFGLKAGQIPGFREFLQKVHPRKSVHNGFAKEFWEETFNCHLQDGAKGPLPVDTFVRSHEEGGNRLLNSSTAFRPLCTGDENINSVETPYMDYEHLRISYNVYLAVYSIAHALQDIYTCLPGRGLFTNGSCADIKKVEAWQVLKHLRHLNFTNNMGEQVTFDECGDLVGNYSIINWHLSPEDGSIVFKEVGYYNVYAKKGERLFINEGKILWSGFSREVPFSNCSRDCQAGTRKGIIEGEPTCCFECVECPDGEYSGETDASACDKCPDDFWSNENHTSCIAKEIEFLAWTEPFGIALTLFAVLGIFLTAFVLGVFIKFRNTPIVKATNRELSYLLLFSLLCCFSSSLFFIGEPQDWTCRLRQPAFGISFVLCISCILVKTNRVLLVFEAKIPTSFHRKWWGLNLQFLLVFLCTFMQIVICIIWLYTAPPSSYRNHELEDEIIFITCHEGSLMALGSLIGYTCLLAAICFFFAFKSRKLPENFNEAKFITFSMLIFFIVWISFIPAYASTYGKFVSAVEVIAILAASFGLLACIFFNKVYIILFKPSRNTIEEVRSSTAAHAFKVAARATLRRPNISRKRSSSLGGSTGSIPSSSISSKSNSEDRFPQPERQKQQQPLALTQQEQQQQPLTLQPQQQQQPQQPRCKQKVIFGSGTVTFSLSFDEPQKNAMAHRNSMRQNSLEAQKSNDTLNRHQALLPLQCAEADSEMTIQETGLQGPMVGDHQPEIESPDEMSPALVMSTSRSFVISGGGSSVTENILHS.

The first 19 residues, 1 to 19 (MAWFGYCLALLALTWHSSA), serve as a signal peptide directing secretion. Over 20–610 (YGPDQRAQKK…KEIEFLAWTE (591 aa)) the chain is Extracellular. Residues 22–188 (PDQRAQKKGD…QFKSFLRTIP (167 aa)) are ligand-binding 1 (LB1). Residues Cys-60 and Cys-101 are joined by a disulfide bond. Residue 66 to 70 (RGFRW) coordinates phosphate. Residues Ile-81, Ser-84, Leu-87, and Leu-88 each contribute to the Ca(2+) site. Asn-90 is a glycosylation site (N-linked (GlcNAc...) asparagine). Residue Thr-100 participates in Ca(2+) binding. An N-linked (GlcNAc...) asparagine glycan is attached at Asn-130. Thr-145 provides a ligand contact to Ca(2+). L-tryptophan contacts are provided by Ser-147, Ala-168, and Ser-170. Ca(2+) contacts are provided by Ser-170, Pro-188, Asp-190, Glu-231, and Asp-234. The tract at residues 189–324 (NDEHQATAMA…GGTIGFGLKA (136 aa)) is ligand-binding 2 (LB2). 7 disulfides stabilise this stretch: Cys-236/Cys-561, Cys-358/Cys-395, Cys-437/Cys-449, Cys-542/Cys-562, Cys-546/Cys-565, Cys-568/Cys-582, and Cys-585/Cys-598. 2 residues coordinate spermine: Asp-238 and Ser-240. N-linked (GlcNAc...) asparagine glycosylation is found at Asn-261 and Asn-287. Glu-297 is a binding site for Ca(2+). Glu-297 lines the L-tryptophan pocket. Asn-386 carries an N-linked (GlcNAc...) asparagine glycan. Position 415-417 (415-417 (RIS)) interacts with phosphate. N-linked (GlcNAc...) asparagine glycosylation is found at Asn-446, Asn-468, and Asn-488. Position 489 (Tyr-489) interacts with Ca(2+). The N-linked (GlcNAc...) asparagine glycan is linked to Asn-541. Positions 542 to 612 (CSRDCQAGTR…IEFLAWTEPF (71 aa)) are cysteine-rich (CR). Position 557 (Gly-557) interacts with Ca(2+). Asn-594 carries an N-linked (GlcNAc...) asparagine glycan. Residues 611 to 636 (PFGIALTLFAVLGIFLTAFVLGVFIK) traverse the membrane as a helical segment. The Cytoplasmic segment spans residues 637–648 (FRNTPIVKATNR). The intracellular loop 1 (ICL1) stretch occupies residues 637–648 (FRNTPIVKATNR). The helical transmembrane segment at 649–668 (ELSYLLLFSLLCCFSSSLFF) threads the bilayer. Residues 669 to 674 (IGEPQD) lie on the Extracellular side of the membrane. A helical membrane pass occupies residues 675–698 (WTCRLRQPAFGISFVLCISCILVK). Over 699 to 722 (TNRVLLVFEAKIPTSFHRKWWGLN) the chain is Cytoplasmic. Positions 699–722 (TNRVLLVFEAKIPTSFHRKWWGLN) are intracellular loop 2 (ICL2). The chain crosses the membrane as a helical span at residues 723 to 745 (LQFLLVFLCTFMQIVICIIWLYT). Topologically, residues 746–769 (APPSSYRNHELEDEIIFITCHEGS) are extracellular. Residues 770–789 (LMALGSLIGYTCLLAAICFF) traverse the membrane as a helical segment. Residues 790-805 (FAFKSRKLPENFNEAK) lie on the Cytoplasmic side of the membrane. An intracellular loop 3 (ICL3) region spans residues 790 to 805 (FAFKSRKLPENFNEAK). A helical transmembrane segment spans residues 806–828 (FITFSMLIFFIVWISFIPAYAST). The Extracellular portion of the chain corresponds to 829-832 (YGKF). The helical transmembrane segment at 833–854 (VSAVEVIAILAASFGLLACIFF) threads the bilayer. The Cytoplasmic segment spans residues 855–1079 (NKVYIILFKP…SSVTENILHS (225 aa)). A C-terminus region spans residues 855 to 1079 (NKVYIILFKP…SSVTENILHS (225 aa)). An interaction with RNF19A region spans residues 880-900 (AFKVAARATLRRPNISRKRSS). Thr-888 bears the Phosphothreonine mark. An arginine-rich retention motif region spans residues 890–898 (RRPNISRKR). Positions 894 to 964 (ISRKRSSSLG…QQQPQQPRCK (71 aa)) are disordered. Ser-899 is subject to Phosphoserine. Residues 900 to 918 (SSLGGSTGSIPSSSISSKS) show a composition bias toward low complexity. The segment covering 919–931 (NSEDRFPQPERQK) has biased composition (basic and acidic residues). At Ser-920 the chain carries Phosphoserine. Residues 932 to 961 (QQQPLALTQQEQQQQPLTLQPQQQQQPQQP) are compositionally biased toward low complexity. Phosphoserine is present on Ser-1062.

This sequence belongs to the G-protein coupled receptor 3 family. In terms of assembly, homodimer; disulfide-linked. Interacts with VCP. Interacts with ARRB1. Phosphorylation at Thr-888 by PKC impairs coupling with G(q)/G(11) G-proteins, while it does not affect G(i)/G(o)-coupling. Phosphorylation at Ser-899 by PKA promote plasma membrane localization. In terms of processing, ubiquitinated by RNF19A; which induces proteasomal degradation. In terms of tissue distribution, epidermis, kidney and cartilage.

It localises to the cell membrane. In resting state, adopts an open conformation, anion-binding promoting the inactive configuration. Upon aromatic amino acid-binding, the groove in the extracellular venus flytrap module is closed, thereby inducing the formation of a novel homodimer interface between subunits. Calcium ions stabilize the active state by enhancing homodimer interactions between membrane-proximal domains to fully activate the receptor. Upon activation, the homodimer adopts an asymmetric configuration of the 7-transmembrane region that primes one protomer for G-protein coupling. G-protein binding expands the transmembrane dimer interface; the restriction imposed by the receptor dimer, in combination with intracellular loop 2 (ICL2), enables G-protein activation by facilitating conformational transition of G-protein alpha. Coupling to different classes of G-proteins results in distinct CASR-G-protein interfaces. G-protein-coupled receptor that senses changes in the extracellular concentration of calcium ions and plays a key role in maintaining calcium homeostasis. Senses fluctuations in the circulating calcium concentration: activated by elevated circulating calcium, leading to decreased parathyroid hormone (PTH) secretion in parathyroid glands. In kidneys, acts as a key regulator of renal tubular calcium resorption. Ligand binding causes a conformation change that triggers signaling via guanine nucleotide-binding proteins (G-proteins) and modulates the activity of downstream effectors. CASR is coupled with different G(q)/G(11), G(i)/G(o)- or G(s)-classes of G-proteins depending on the context. In the parathyroid and kidney, CASR signals through G(q)/G(11) and G(i)/G(o) G-proteins: G(q)/G(11) coupling activates phospholipase C-beta, releasing diacylglycerol (DAG) and inositol 1,4,5-trisphosphate (IP3) second messengers, while G(i)/G(o) coupling mediates inhibition of adenylate cyclase activity. The G-protein-coupled receptor activity is activated by a co-agonist mechanism: aromatic amino acids, such as Trp or Phe, act concertedly with divalent cations, such as calcium or magnesium, to achieve full receptor activation. Acts as an activator of the NLRP3 inflammasome via G(i)/G(o)-mediated signaling: down-regulation of cyclic AMP (cAMP) relieving NLRP3 inhibition by cAMP. Acts as a regulator of proton-sensing receptor GPR68 in a seesaw manner: CASR-mediated signaling inhibits GPR68 signaling in response to extracellular calcium, while GPR68 inhibits CASR in presence of extracellular protons. This is Extracellular calcium-sensing receptor from Mus musculus (Mouse).